A 212-amino-acid chain; its full sequence is NEDD4 family-interacting protein 1 (212 aa).

The span at 1 to 14 shows a compositional bias: polar residues; it reads MSEQSSSSRYQQLQ. Residues 1-40 form a disordered region; sequence MSEQSSSSRYQQLQNEEEPGENAQASADAPPPYSSIAGES. At 1-107 the chain is on the cytoplasmic side; that stretch reads MSEQSSSSRY…ADQLRIGNDG (107 aa). 2 short sequence motifs (PPxY motif) span residues 30-33 and 55-58; these read PPPY and PPSY. Residues 108–128 traverse the membrane as a helical segment; sequence IFMLTFFMAFLFNWIGFFLSF. Over 129-134 the chain is Extracellular; sequence CLTSSA. Residues 135–155 form a helical membrane-spanning segment; the sequence is AGRYGAISGFGLSLIKWILIV. Over 156 to 163 the chain is Cytoplasmic; that stretch reads RFSTYFPG. Residues 164 to 184 traverse the membrane as a helical segment; sequence YFDGQYWLWWVFLVLGFLLFL. Over 185 to 212 the chain is Extracellular; that stretch reads RGFINYAKVRKMPDNFSTLPRTRVLFIY.

The protein localises to the golgi apparatus membrane. In terms of biological role, may play a role in Golgi structure maintenance. The chain is NEDD4 family-interacting protein 1 (ndfip1) from Xenopus laevis (African clawed frog).